A 391-amino-acid polypeptide reads, in one-letter code: MNIHEYQAKQIFAKYGVPTPKGLMAESVKQAVANAETLGGSIWVVKAQIHAGGRGLGGGVKLARSLEEVEQLSKEILGMTLVTHQTGPEGKLVQKLYIEEGADIKEELYLGVVLDRAREMPVIMASTEGGMAIEDVAHNTPEKIIKIAVDPAIGFQGFHGRELVFGLGITDPNEQKKLISFASKLYKLYMENDAEMIEINPLVKTGSGEFLALDGKMGFDDSALGRHPDIEDMRDISEEDADEREAGKYGLSYVSLDGEIGCMVNGAGLAMGTMDTINYMGGTPANFLDVGGKANAETVAKGFEIILKNPKVKAIFVNIFGGIVRCDRIANGILEATKLVDVHVPVIVRLDGTNAEEAAAILRDANIANVIAATDLADGAAKAVAAAAQAK.

One can recognise an ATP-grasp domain in the interval 9-245; it reads KQIFAKYGVP…ISEEDADERE (237 aa). ATP contacts are provided by residues Lys-46, 53 to 55, Glu-99, Ala-102, and Glu-107; that span reads GRG. Mg(2+)-binding residues include Asn-200 and Asp-214. Substrate is bound by residues Asn-265 and 322–324; that span reads GIV.

Belongs to the succinate/malate CoA ligase beta subunit family. As to quaternary structure, heterotetramer of two alpha and two beta subunits. Mg(2+) is required as a cofactor.

The enzyme catalyses succinate + ATP + CoA = succinyl-CoA + ADP + phosphate. It carries out the reaction GTP + succinate + CoA = succinyl-CoA + GDP + phosphate. It participates in carbohydrate metabolism; tricarboxylic acid cycle; succinate from succinyl-CoA (ligase route): step 1/1. In terms of biological role, succinyl-CoA synthetase functions in the citric acid cycle (TCA), coupling the hydrolysis of succinyl-CoA to the synthesis of either ATP or GTP and thus represents the only step of substrate-level phosphorylation in the TCA. The beta subunit provides nucleotide specificity of the enzyme and binds the substrate succinate, while the binding sites for coenzyme A and phosphate are found in the alpha subunit. The polypeptide is Succinate--CoA ligase [ADP-forming] subunit beta (Sulfurimonas denitrificans (strain ATCC 33889 / DSM 1251) (Thiomicrospira denitrificans (strain ATCC 33889 / DSM 1251))).